The following is a 201-amino-acid chain: Glycerol-3-phosphate acyltransferase (201 aa).

5 helical membrane-spanning segments follow: residues 10-30 (MLIG…GLIL), 60-80 (LAAA…LIAA), 86-106 (AAIA…WIGF), 116-136 (LGVL…AWIV), and 166-186 (ALAA…RANI).

The protein belongs to the PlsY family. As to quaternary structure, probably interacts with PlsX.

Its subcellular location is the cell inner membrane. It carries out the reaction an acyl phosphate + sn-glycerol 3-phosphate = a 1-acyl-sn-glycero-3-phosphate + phosphate. It functions in the pathway lipid metabolism; phospholipid metabolism. Catalyzes the transfer of an acyl group from acyl-phosphate (acyl-PO(4)) to glycerol-3-phosphate (G3P) to form lysophosphatidic acid (LPA). This enzyme utilizes acyl-phosphate as fatty acyl donor, but not acyl-CoA or acyl-ACP. The chain is Glycerol-3-phosphate acyltransferase from Brucella canis (strain ATCC 23365 / NCTC 10854 / RM-666).